The primary structure comprises 111 residues: Large ribosomal subunit protein uL22 (111 aa).

Belongs to the universal ribosomal protein uL22 family. In terms of assembly, part of the 50S ribosomal subunit.

This protein binds specifically to 23S rRNA; its binding is stimulated by other ribosomal proteins, e.g. L4, L17, and L20. It is important during the early stages of 50S assembly. It makes multiple contacts with different domains of the 23S rRNA in the assembled 50S subunit and ribosome. Its function is as follows. The globular domain of the protein is located near the polypeptide exit tunnel on the outside of the subunit, while an extended beta-hairpin is found that lines the wall of the exit tunnel in the center of the 70S ribosome. This Clostridium acetobutylicum (strain ATCC 824 / DSM 792 / JCM 1419 / IAM 19013 / LMG 5710 / NBRC 13948 / NRRL B-527 / VKM B-1787 / 2291 / W) protein is Large ribosomal subunit protein uL22.